The primary structure comprises 214 residues: Adenylate kinase (214 aa).

10-15 (GAGKGT) contacts ATP. Residues 30 to 59 (STGDMLRGAIKAGTDLGKQAKTLMDAGQLV) form an NMP region. Residues Thr31, Arg36, 57 to 59 (QLV), 85 to 88 (GFPR), and Gln92 contribute to the AMP site. The interval 122–159 (GRRVHQASGRTYHVVYNPPKVEGKDDVTGEDLIIRADD) is LID. Residues Arg123 and 132–133 (TY) contribute to the ATP site. The AMP site is built by Arg156 and Arg167. Lys200 contacts ATP.

This sequence belongs to the adenylate kinase family. In terms of assembly, monomer.

Its subcellular location is the cytoplasm. The enzyme catalyses AMP + ATP = 2 ADP. It participates in purine metabolism; AMP biosynthesis via salvage pathway; AMP from ADP: step 1/1. In terms of biological role, catalyzes the reversible transfer of the terminal phosphate group between ATP and AMP. Plays an important role in cellular energy homeostasis and in adenine nucleotide metabolism. This is Adenylate kinase from Pasteurella multocida (strain Pm70).